Here is a 513-residue protein sequence, read N- to C-terminus: Histidine--tRNA ligase (513 aa).

Residues 1–24 constitute a mitochondrion transit peptide; it reads MADKAQLQEAIKTQGEVVRKLKSE. In terms of domain architecture, WHEP-TRS spans 3–59; that stretch reads DKAQLQEAIKTQGEVVRKLKSEKASKEQIDEEVARLLQLKAQLGGDEGKHVFVLKTA. Residues 130–132, Arg-157, Gln-173, Asp-177, Arg-326, and 330–331 contribute to the L-histidine site; these read DLT and YY.

It belongs to the class-II aminoacyl-tRNA synthetase family.

Its subcellular location is the cytoplasm. The protein localises to the mitochondrion. The catalysed reaction is tRNA(His) + L-histidine + ATP = L-histidyl-tRNA(His) + AMP + diphosphate + H(+). In terms of biological role, catalyzes the aminoacylation of histidyl-tRNA. This Danio rerio (Zebrafish) protein is Histidine--tRNA ligase.